Reading from the N-terminus, the 361-residue chain is MSASSSAISPSASHLGADPKIVRRLSSVSHIILVLSGKGGVGKSSVSAQLALSLSSSASPSDRSRMARVGILDIDLTGPSIPRMLGLGGASVKQSTDGWVPVYTDASQHLAVMSVGFLLRSKNDSVVWRGPKKNAMIKQFLGDVRWGTLDYLIIDTPPGTSDEHISILEYLRTFEPAAVMVTTPQAVSLADNLRSLDFCRKTSLPVLGLIENMSGYICPHCNDCTNVWGKGGGEALAKREGLRFLGRIPIDPGLVRVLDDAKDDAHVELQKQLHQTSLNDNVLKAIDQPLTPHSQSAAAQLPNSGDTESLTPAGTMLSRTTIQRYKNSLTFPIFQEITDQIRDLATKHKLHPQSSVLTTAL.

37–44 lines the ATP pocket; that stretch reads GKGGVGKS. Residues Cys-218 and Cys-221 each contribute to the [4Fe-4S] cluster site. A disordered region spans residues 293–314; the sequence is HSQSAAAQLPNSGDTESLTPAG.

Belongs to the Mrp/NBP35 ATP-binding proteins family. NUBP2/CFD1 subfamily. In terms of assembly, heterotetramer of 2 NBP35 and 2 CFD1 chains. [4Fe-4S] cluster is required as a cofactor.

It is found in the cytoplasm. Its function is as follows. Component of the cytosolic iron-sulfur (Fe/S) protein assembly (CIA) machinery. Required for maturation of extramitochondrial Fe-S proteins. The NBP35-CFD1 heterotetramer forms a Fe-S scaffold complex, mediating the de novo assembly of an Fe-S cluster and its transfer to target apoproteins. This chain is Cytosolic Fe-S cluster assembly factor CFD1, found in Mycosarcoma maydis (Corn smut fungus).